The primary structure comprises 302 residues: MKKNRLNLNGVVVINKAKDVSSNKVLQQLKYLFNAQKAGHTGTLDPMATGVLPICFGRATKIAQYLLDADKEYIATIRLGIETDSGDAEGEIIAKSPNIPELSAEYLETVLAKFRGDVVQIPPMYSALKYNGQPLYKLAREGKTVEVKSRNIKIYELELLEFDIDSLKIRVKCSKGTYIRSLAIDIGKTLGCGGHLIALQRTQSGPFKLSEAFRLEQLKDLSFEQKIASITNIESVFIDKPIYSLLEEEKDDLYKRGLFADKPHLDGTVRIYDDEKFVAIAEFDKGKLINKKFFDQDILISE.

The active-site Nucleophile is aspartate 45.

Belongs to the pseudouridine synthase TruB family. Type 1 subfamily.

The catalysed reaction is uridine(55) in tRNA = pseudouridine(55) in tRNA. Its function is as follows. Responsible for synthesis of pseudouridine from uracil-55 in the psi GC loop of transfer RNAs. This is tRNA pseudouridine synthase B from Francisella tularensis subsp. novicida (strain U112).